The chain runs to 638 residues: 1-deoxy-D-xylulose-5-phosphate synthase (638 aa).

Residues His71 and 112-114 (SHA) contribute to the thiamine diphosphate site. Asp144 lines the Mg(2+) pocket. Residues 145–146 (GA), Asn173, Tyr284, and Glu365 each bind thiamine diphosphate. Asn173 provides a ligand contact to Mg(2+).

This sequence belongs to the transketolase family. DXPS subfamily. Homodimer. Mg(2+) is required as a cofactor. Requires thiamine diphosphate as cofactor.

The enzyme catalyses D-glyceraldehyde 3-phosphate + pyruvate + H(+) = 1-deoxy-D-xylulose 5-phosphate + CO2. It functions in the pathway metabolic intermediate biosynthesis; 1-deoxy-D-xylulose 5-phosphate biosynthesis; 1-deoxy-D-xylulose 5-phosphate from D-glyceraldehyde 3-phosphate and pyruvate: step 1/1. Functionally, catalyzes the acyloin condensation reaction between C atoms 2 and 3 of pyruvate and glyceraldehyde 3-phosphate to yield 1-deoxy-D-xylulose-5-phosphate (DXP). This is 1-deoxy-D-xylulose-5-phosphate synthase from Mycobacterium bovis (strain ATCC BAA-935 / AF2122/97).